The primary structure comprises 260 residues: Thiamine thiazole synthase (260 aa).

Residues Ala-36, 55–56, Gly-63, and 154–156 each bind NAD(+); these read EQ and HVD. The Fe cation site is built by Asp-156 and His-171. Met-224 contributes to the NAD(+) binding site. A glycine-binding site is contributed by Arg-234.

It belongs to the THI4 family. Homooctamer; tetramer of dimers. Requires Fe(2+) as cofactor.

It catalyses the reaction hydrogen sulfide + glycine + NAD(+) = ADP-5-ethyl-4-methylthiazole-2-carboxylate + nicotinamide + 3 H2O + H(+). The protein operates within cofactor biosynthesis; thiamine diphosphate biosynthesis. Functionally, involved in the biosynthesis of the thiazole moiety of thiamine. Catalyzes the conversion of NAD and glycine to adenosine diphosphate 5-(2-hydroxyethyl)-4-methylthiazole-2-carboxylate (ADT), an adenylated thiazole intermediate, using free sulfide as a source of sulfur. The polypeptide is Thiamine thiazole synthase (Methanosarcina mazei (strain ATCC BAA-159 / DSM 3647 / Goe1 / Go1 / JCM 11833 / OCM 88) (Methanosarcina frisia)).